A 1071-amino-acid chain; its full sequence is Carbamoyl phosphate synthase pyrimidine-specific large chain (1071 aa).

Positions 1–401 are carboxyphosphate synthetic domain; sequence MPKRVDINKI…SLLKAVRSLE (401 aa). Positions 129, 169, 175, 176, 208, 210, 215, 241, 242, 243, 284, and 298 each coordinate ATP. In terms of domain architecture, ATP-grasp 1 spans 133 to 327; that stretch reads RTLMNELNEP…IAKLAAKIAV (195 aa). Residues Q284, E298, and N300 each coordinate Mg(2+). Q284, E298, and N300 together coordinate Mn(2+). Positions 402 to 546 are oligomerization domain; that stretch reads ADVYHLELKD…YSTYEEENES (145 aa). The carbamoyl phosphate synthetic domain stretch occupies residues 547–929; that stretch reads VVTDKKSVMV…ALYKALIASG (383 aa). The region spanning 671-861 is the ATP-grasp 2 domain; it reads EQALGELGVP…MANLATKIIL (191 aa). Residues R707, R746, L748, E752, G777, V778, H779, S780, Q820, and E832 each coordinate ATP. Q820, E832, and N834 together coordinate Mg(2+). Mn(2+) contacts are provided by Q820, E832, and N834. The MGS-like domain occupies 930–1071; the sequence is IQIPNYGSVL…NTNQEAAVTI (142 aa). The segment at 930 to 1071 is allosteric domain; sequence IQIPNYGSVL…NTNQEAAVTI (142 aa).

It belongs to the CarB family. As to quaternary structure, composed of two chains; the small (or glutamine) chain promotes the hydrolysis of glutamine to ammonia, which is used by the large (or ammonia) chain to synthesize carbamoyl phosphate. Tetramer of heterodimers (alpha,beta)4. Interacts with BrxC. Requires Mg(2+) as cofactor. It depends on Mn(2+) as a cofactor.

It carries out the reaction hydrogencarbonate + L-glutamine + 2 ATP + H2O = carbamoyl phosphate + L-glutamate + 2 ADP + phosphate + 2 H(+). The enzyme catalyses hydrogencarbonate + NH4(+) + 2 ATP = carbamoyl phosphate + 2 ADP + phosphate + 2 H(+). Its pathway is amino-acid biosynthesis; L-arginine biosynthesis; carbamoyl phosphate from bicarbonate: step 1/1. It functions in the pathway pyrimidine metabolism; UMP biosynthesis via de novo pathway; (S)-dihydroorotate from bicarbonate: step 1/3. Its function is as follows. Small subunit of the glutamine-dependent carbamoyl phosphate synthetase (CPSase). CPSase catalyzes the formation of carbamoyl phosphate from the ammonia moiety of glutamine, carbonate, and phosphate donated by ATP, constituting the first step of the biosynthetic pathway leading to pyrimidine nucleotides. The large subunit (synthetase) binds the substrates ammonia (free or transferred from glutamine from the small subunit), hydrogencarbonate and ATP and carries out an ATP-coupled ligase reaction, activating hydrogencarbonate by forming carboxy phosphate which reacts with ammonia to form carbamoyl phosphate. In Bacillus subtilis (strain 168), this protein is Carbamoyl phosphate synthase pyrimidine-specific large chain (pyrAB).